The following is a 32-amino-acid chain: 24 kDa flagellin (32 aa).

Belongs to the archaeal flagellin family. Glycosylated.

The protein localises to the archaeal flagellum. Its function is as follows. Flagellin is the subunit protein which polymerizes to form the filaments of archaeal flagella. The protein is 24 kDa flagellin of Methanospirillum hungatei.